The chain runs to 431 residues: Tol-Pal system protein TolB (431 aa).

The first 26 residues, 1 to 26 (MSLMTKLGFRALVASCLITAGSAANA), serve as a signal peptide directing secretion. The segment at 411–431 (PQILSVQGGSVREPSWGPFMQ) is disordered.

This sequence belongs to the TolB family. As to quaternary structure, the Tol-Pal system is composed of five core proteins: the inner membrane proteins TolA, TolQ and TolR, the periplasmic protein TolB and the outer membrane protein Pal. They form a network linking the inner and outer membranes and the peptidoglycan layer.

Its subcellular location is the periplasm. In terms of biological role, part of the Tol-Pal system, which plays a role in outer membrane invagination during cell division and is important for maintaining outer membrane integrity. The sequence is that of Tol-Pal system protein TolB from Burkholderia lata (strain ATCC 17760 / DSM 23089 / LMG 22485 / NCIMB 9086 / R18194 / 383).